We begin with the raw amino-acid sequence, 917 residues long: Intercellular adhesion molecule 5 (917 aa).

The N-terminal stretch at 1–31 is a signal peptide; that stretch reads MPGPSPGLRRALLGLWAALGLGILGISAVAL. Residues 32–833 are Extracellular-facing; the sequence is EPFWADLQPR…RITVRVAGPW (802 aa). Ig-like C2-type domains follow at residues 48 to 130, 135 to 235, 242 to 329, 337 to 402, 408 to 486, 491 to 567, 572 to 651, 665 to 738, and 745 to 828; these read GGSL…PLPS, GENF…SLIA, DSER…LLTL, GKMV…SSEL, PRLD…VTLT, PALD…VAVT, PSFE…NRHG, PQMD…RTVT, and PVVA…ITVR. The N-linked (GlcNAc...) (high mannose) asparagine glycan is linked to Asn-54. 2 cysteine pairs are disulfide-bonded: Cys-55/Cys-99 and Cys-59/Cys-103. N-linked (GlcNAc...) asparagine glycosylation is found at Asn-74 and Asn-137. Residues Cys-142 and Cys-198 are joined by a disulfide bond. Thr-182 is modified (phosphothreonine). Asn-195, Asn-214, Asn-274, Asn-316, Asn-371, and Asn-397 each carry an N-linked (GlcNAc...) asparagine glycan. Cys-249 and Cys-302 are disulfide-bonded. Cys-344 and Cys-383 are oxidised to a cystine. 3 disulfide bridges follow: Cys-415/Cys-470, Cys-498/Cys-551, and Cys-579/Cys-644. Asn-582 and Asn-645 each carry an N-linked (GlcNAc...) asparagine glycan. Cys-672 and Cys-724 are oxidised to a cystine. N-linked (GlcNAc...) asparagine glycans are attached at residues Asn-762, Asn-793, and Asn-794. Residues Cys-767 and Cys-812 are joined by a disulfide bond. Residues 834 to 854 traverse the membrane as a helical segment; that stretch reads LWVAVGGAAGGAALLAAGAGL. Residues 855-917 lie on the Cytoplasmic side of the membrane; that stretch reads AFYVQSTACK…EVFAIQLTSS (63 aa). A compositionally biased stretch (gly residues) spans 884 to 893; the sequence is GAGGTPGAEG. Residues 884 to 908 are disordered; that stretch reads GAGGTPGAEGGAETPGTAESPADGE.

It belongs to the immunoglobulin superfamily. ICAM family. Post-translationally, glycosylation at Asn-54 is critical for functional folding. As to expression, expressed on neurons in the most rostral segment of the mammalian brain, the telencephalon.

Its subcellular location is the membrane. Its function is as follows. ICAM proteins are ligands for the leukocyte adhesion protein LFA-1 (integrin alpha-L/beta-2). The polypeptide is Intercellular adhesion molecule 5 (Icam5) (Mus musculus (Mouse)).